The chain runs to 327 residues: Serine/threonine-protein phosphatase PP1-beta catalytic subunit (327 aa).

Position 2 is an N-acetylalanine (A2). 4 residues coordinate Mn(2+): D63, H65, D91, and N123. The Proton donor role is filled by H124. H172 and H247 together coordinate Mn(2+). Residues 305 to 327 are disordered; the sequence is QYGGLNSGRPVTPPRTANPPKKR. A Phosphothreonine modification is found at T316.

This sequence belongs to the PPP phosphatase family. PP-1 subfamily. As to quaternary structure, PP1 comprises a catalytic subunit, PPP1CA, PPP1CB or PPP1CC, which is folded into its native form by inhibitor 2 and glycogen synthetase kinase 3, and then complexed to one or several targeting or regulatory subunits. The targeting or regulatory subunits determine the substrate specificity of PP1. PPP1R12A, PPP1R12B and PPP1R12C mediate binding to myosin. PPP1R3A (in skeletal muscle), PPP1R3B (in liver), PPP1R3C, PPP1R3D and PPP1R3F (in brain) mediate binding to glycogen. PPP1R15A and PPP1R15B mediate binding to EIF2S1. Part of a complex containing PPP1R15B, PP1 and NCK1/2. Interacts with PPP1R7 and PPP1R12C. Interacts with PPP1R16B. Component of the PTW/PP1 phosphatase complex, composed of PPP1R10/PNUTS, TOX4, WDR82, and PPP1CA or PPP1CB or PPP1CC. Interacts with PPP1R8. Interacts with PPP1R12A and NUAK1; the interaction is direct. Interacts with TRIM28; the interaction is weak. Interacts with FOXP3. Interacts with RRP1B. Interacts with SERPINE1. Interacts with LZTR1. Component of the SHOC2-MRAS-PP1c (SMP) complex consisting of SHOC2, GTP-bound M-Ras/MRAS and the catalytic subunit of protein phosphatase 1 (either PPP1CA, PPP1CB or PPP1CC). SHOC2 and PP1c preferably bind M-Ras/MRAS, but they also bind K-Ras/KRAS, N-Ras/NRAS and H-Ras/HRAS; these interactions are GTP-dependent and both SHOC2 and PP1c are required to form a stable complex. Interacts with SHOC2 in the absence of Ras GTPases. Mn(2+) is required as a cofactor.

It is found in the cytoplasm. Its subcellular location is the nucleus. The protein resides in the nucleoplasm. It localises to the nucleolus. It carries out the reaction O-phospho-L-seryl-[protein] + H2O = L-seryl-[protein] + phosphate. The enzyme catalyses O-phospho-L-threonyl-[protein] + H2O = L-threonyl-[protein] + phosphate. The catalysed reaction is O-phospho-L-seryl-[myosin light chain] + H2O = L-seryl-[myosin light chain] + phosphate. It catalyses the reaction O-phospho-L-threonyl-[myosin light chain] + H2O = L-threonyl-[myosin light chain] + phosphate. Its activity is regulated as follows. Inhibited by the toxins okadaic acid, tautomycin and microcystin Leu-Arg. The phosphatase activity of the PPP1R15A-PP1 complex toward EIF2S1 is specifically inhibited by Salubrinal, a drug that protects cells from endoplasmic reticulum stress. Its function is as follows. Protein phosphatase that associates with over 200 regulatory proteins to form highly specific holoenzymes which dephosphorylate hundreds of biological targets. Protein phosphatase (PP1) is essential for cell division, it participates in the regulation of glycogen metabolism, muscle contractility and protein synthesis. Involved in regulation of ionic conductances and long-term synaptic plasticity. Component of the PTW/PP1 phosphatase complex, which plays a role in the control of chromatin structure and cell cycle progression during the transition from mitosis into interphase. In balance with CSNK1D and CSNK1E, determines the circadian period length, through the regulation of the speed and rhythmicity of PER1 and PER2 phosphorylation. May dephosphorylate CSNK1D and CSNK1E. Core component of the SHOC2-MRAS-PP1c (SMP) holophosphatase complex that regulates the MAPK pathway activation. The SMP complex specifically dephosphorylates the inhibitory phosphorylation at 'Ser-259' of RAF1 kinase, 'Ser-365' of BRAF kinase and 'Ser-214' of ARAF kinase, stimulating their kinase activities. The SMP complex enhances the dephosphorylation activity and substrate specificity of PP1c. In Bos taurus (Bovine), this protein is Serine/threonine-protein phosphatase PP1-beta catalytic subunit (PPP1CB).